The primary structure comprises 501 residues: Ribose import ATP-binding protein RbsA (501 aa).

ABC transporter domains are found at residues 5 to 241 and 252 to 495; these read LQLK…VGRK and APGE…VGKL. Residue 37-44 coordinates ATP; that stretch reads GENGAGKS.

This sequence belongs to the ABC transporter superfamily. Ribose importer (TC 3.A.1.2.1) family. As to quaternary structure, the complex is composed of an ATP-binding protein (RbsA), two transmembrane proteins (RbsC) and a solute-binding protein (RbsB).

The protein resides in the cell inner membrane. It carries out the reaction D-ribose(out) + ATP + H2O = D-ribose(in) + ADP + phosphate + H(+). Its function is as follows. Part of the ABC transporter complex RbsABC involved in ribose import. Responsible for energy coupling to the transport system. This is Ribose import ATP-binding protein RbsA from Salmonella typhi.